The primary structure comprises 261 residues: MANLLDKTRKITSILQRSVDSLEGDLPYNNMAAQLADIIDCNAAIVNGGGALLGFAMKYKTNNDRVEKFFKAKQLPEEYIRGISRVYDTQENIGIDSDLTIFPVELKDDFPDGLTTIAPIYGGGMRLGSFIIWRNDHDFVDDDLILVEIASTVVGLQLLHLQTENLEETIRKQTAINMAINTLSYSEIKAVSAILNELDGLEGRLTASVIADRIGITRSVIVNALRKLESAGIIESRSLGMKGTYLKVLNEGIYDKLKEYE.

The tract at residues 1–159 (MANLLDKTRK…ASTVVGLQLL (159 aa)) is GAF domain. Residues 207–226 (ASVIADRIGITRSVIVNALR) constitute a DNA-binding region (H-T-H motif).

The protein belongs to the CodY family.

It is found in the cytoplasm. DNA-binding global transcriptional regulator which is involved in the adaptive response to starvation and acts by directly or indirectly controlling the expression of numerous genes in response to nutrient availability. During rapid exponential growth, CodY is highly active and represses genes whose products allow adaptation to nutrient depletion. This is Global transcriptional regulator CodY from Streptococcus thermophilus (strain CNRZ 1066).